The primary structure comprises 1133 residues: Exportin-4 (1133 aa).

It belongs to the exportin family. As to quaternary structure, interacts with Ran and cargo proteins in a GTP-dependent manner.

The protein localises to the cytoplasm. The protein resides in the nucleus. Mediates the nuclear export of proteins (cargos). In the nucleus binds cooperatively to its cargo and to the GTPase Ran in its active GTP-bound form. Docking of this trimeric complex to the nuclear pore complex (NPC) is mediated through binding to nucleoporins. Upon transit of a nuclear export complex into the cytoplasm, disassembling of the complex and hydrolysis of Ran-GTP to Ran-GDP cause release of the cargo from the export receptor. Xpo4 then return to the nuclear compartment and mediate another round of transport. The directionality of nuclear export is thought to be conferred by an asymmetric distribution of the GTP- and GDP-bound forms of Ran between the cytoplasm and nucleus. This is Exportin-4 (xpo4) from Dictyostelium discoideum (Social amoeba).